Consider the following 84-residue polypeptide: MPYVLISTQIRMETGPTIVGDEFSDLVLMAQLEADKRTVLGNNFSEYYVNEPPRVTLNKLERLGYRVVSMTGVGQTLVWCLHKE.

This sequence belongs to the GFRP family. In terms of assembly, homopentamer. Forms a complex with GCH1 where a GCH1 homodecamer is sandwiched by two GFRP homopentamers.

Its subcellular location is the nucleus. The protein resides in the nucleus membrane. It localises to the cytoplasm. The protein localises to the cytosol. Its function is as follows. Mediates tetrahydrobiopterin inhibition of GTP cyclohydrolase 1. This Xenopus laevis (African clawed frog) protein is GTP cyclohydrolase 1 feedback regulatory protein (gchfr).